A 247-amino-acid polypeptide reads, in one-letter code: Uridylate kinase (247 aa).

Position 16 to 19 (16 to 19 (KLSG)) interacts with ATP. Gly-58 is a UMP binding site. The ATP site is built by Gly-59 and Arg-63. UMP contacts are provided by residues Asp-78 and 139-146 (TGNPFFTT). ATP is bound by residues Thr-166, Tyr-172, and Asp-175.

Belongs to the UMP kinase family. Homohexamer.

Its subcellular location is the cytoplasm. The enzyme catalyses UMP + ATP = UDP + ADP. It functions in the pathway pyrimidine metabolism; CTP biosynthesis via de novo pathway; UDP from UMP (UMPK route): step 1/1. Inhibited by UTP. Its function is as follows. Catalyzes the reversible phosphorylation of UMP to UDP. This chain is Uridylate kinase, found in Xylella fastidiosa (strain 9a5c).